Consider the following 937-residue polypeptide: Protein translocase subunit SecA (937 aa).

ATP contacts are provided by residues Gln90, 108-112 (GEGKT), and Asp509.

The protein belongs to the SecA family. In terms of assembly, monomer and homodimer. Part of the essential Sec protein translocation apparatus which comprises SecA, SecYEG and auxiliary proteins SecDF. Other proteins may also be involved.

The protein localises to the cell inner membrane. The protein resides in the cellular thylakoid membrane. It localises to the cytoplasm. It catalyses the reaction ATP + H2O + cellular proteinSide 1 = ADP + phosphate + cellular proteinSide 2.. In terms of biological role, part of the Sec protein translocase complex. Interacts with the SecYEG preprotein conducting channel. Has a central role in coupling the hydrolysis of ATP to the transfer of proteins into and across the cell membrane, serving as an ATP-driven molecular motor driving the stepwise translocation of polypeptide chains across the membrane. Its function is as follows. Probably participates in protein translocation into and across both the cytoplasmic and thylakoid membranes in cyanobacterial cells. This is Protein translocase subunit SecA from Synechococcus sp. (strain CC9902).